The following is a 299-amino-acid chain: Taste receptor type 2 member 19 (299 aa).

Position 1 (methionine 1) is a topological domain, extracellular. The chain crosses the membrane as a helical span at residues 2–22; that stretch reads MCFLLIISSILVVFAFVLGNV. At 23–55 the chain is on the cytoplasmic side; that stretch reads ANGFIALVNVIDWVNTRKISSAEQILTALVVSR. Residues 56–76 traverse the membrane as a helical segment; the sequence is IGLLWVMLFLWYATVFNSALY. At 77–87 the chain is on the extracellular side; the sequence is GLEVRIVASNA. Residues 88–108 form a helical membrane-spanning segment; that stretch reads WAVTNHFSMWLAASLSIFCLL. The Cytoplasmic segment spans residues 109–127; it reads KIANFSNLISLHLKKRIKS. A helical membrane pass occupies residues 128-148; that stretch reads VVLVILLGPLVFLICNLAVIT. Over 149–181 the chain is Extracellular; sequence MDERVWTKEYEGNVTWKIKLRNAIHLSSLTVTT. Residue asparagine 161 is glycosylated (N-linked (GlcNAc...) asparagine). Residues 182–202 form a helical membrane-spanning segment; sequence LANLIPFTLSLICFLLLICSL. The Cytoplasmic portion of the chain corresponds to 203-226; that stretch reads CKHLKKMRLHSKGSQDPSTKVHIK. The helical transmembrane segment at 227–247 threads the bilayer; sequence ALQTVTSFLMLFAIYFLCIIT. At 248–259 the chain is on the extracellular side; that stretch reads STWNLRTQQSKL. The helical transmembrane segment at 260–280 threads the bilayer; it reads VLLLCQTVAIMYPSFHSFILI. Residues 281–299 lie on the Cytoplasmic side of the membrane; sequence MGSRKLKQTFLSVLWQMTR.

It belongs to the G-protein coupled receptor T2R family. In terms of tissue distribution, expressed in subsets of taste receptor cells of the tongue and exclusively in gustducin-positive cells.

Its subcellular location is the membrane. Its function is as follows. Receptor that may play a role in the perception of bitterness and is gustducin-linked. May play a role in sensing the chemical composition of the gastrointestinal content. The activity of this receptor may stimulate alpha gustducin, mediate PLC-beta-2 activation and lead to the gating of TRPM5. The chain is Taste receptor type 2 member 19 (TAS2R19) from Homo sapiens (Human).